A 240-amino-acid chain; its full sequence is Regulatory protein HlyX (240 aa).

Positions 15-28 are essential for the oxygen-regulated activity; it reads CTIHCQNCSISQLC. Residues 163–236 enclose the HTH crp-type domain; it reads MSAEEKLAAF…GKYITINRMD (74 aa). The segment at residues 196 to 215 is a DNA-binding region (H-T-H motif); it reads RGDIGNYLGLTIETISRLLG.

Its subcellular location is the cytoplasm. Confers a hemolytic phenotype on E.coli. May regulate, rather than mediate, hemolytic activity. The protein is Regulatory protein HlyX (hlyX) of Actinobacillus pleuropneumoniae (Haemophilus pleuropneumoniae).